The primary structure comprises 154 residues: Ribonuclease 8 (154 aa).

The N-terminal stretch at 1-27 (MAPARAGCCPLLLLLLGLRVAQIPVSA) is a signal peptide. Catalysis depends on H42, which acts as the Proton acceptor. 3 cysteine pairs are disulfide-bonded: C64–C118, C82–C133, and C89–C96. Substrate-binding positions include 65-69 (KDLNT) and K90. H149 functions as the Proton donor in the catalytic mechanism.

The protein belongs to the pancreatic ribonuclease family.

The protein resides in the secreted. In terms of biological role, has a low ribonuclease activity. The protein is Ribonuclease 8 (RNASE8) of Miopithecus talapoin (Angolan talapoin).